A 1320-amino-acid polypeptide reads, in one-letter code: Clustered mitochondria protein homolog (1320 aa).

3 disordered regions span residues 166–241, 552–582, and 683–708; these read QQLE…KQKM, YGSM…TKSI, and LKEK…EDVQ. Over residues 185-194 the composition is skewed to basic and acidic residues; that stretch reads TEDKEEKETI. The span at 202 to 213 shows a compositional bias: basic residues; that stretch reads KKNKHHNKKGNK. Basic and acidic residues-rich tracts occupy residues 226 to 241, 565 to 575, and 683 to 695; these read NEEK…KQKM, QQQKEENEENK, and LKEK…KEGI. Positions 379 to 649 constitute a Clu domain; it reads KTNRYDINKG…KATPRDPNYT (271 aa). TPR repeat units lie at residues 955–988, 997–1030, 1039–1072, 1081–1114, and 1123–1156; these read GLDL…YHQV, GACF…TEKT, VQAY…TDLL, ASIY…QEFL, and STTY…LEKE. Residues 1204–1320 are disordered; it reads KADQFKKSQP…SKPNKKSSKN (117 aa). Positions 1237–1247 are enriched in basic residues; sequence KPKKSQSKKSK. Low complexity predominate over residues 1248–1311; it reads STNTTTTTNT…PTSSSAADSS (64 aa).

It belongs to the CLU family.

Its subcellular location is the cytoplasm. In terms of biological role, mRNA-binding protein involved in proper cytoplasmic distribution of mitochondria. This Dictyostelium discoideum (Social amoeba) protein is Clustered mitochondria protein homolog.